The chain runs to 715 residues: Gelsolin, cytoplasmic (715 aa).

Residues 1-124 (MTTELEIQKA…YLIGGVASGF (124 aa)) form an actin-severing region. The Gelsolin-like 1 repeat unit spans residues 24–75 (FELVPVPKTNHGKFYTGDSYIILKTTALESGRGFEWNLHYWQGKESSQDERG). The interval 72–75 (DERG) is actin-actin interfilament contact point. 136 to 145 (KVLTRVKGKR) provides a ligand contact to a 1,2-diacyl-sn-glycero-3-phospho-(1D-myo-inositol-4,5-bisphosphate). 3 Gelsolin-like repeats span residues 147–187 (VRAT…FEKN), 260–306 (LKIT…TERA), and 405–451 (LRKE…NERT). The tract at residues 384–715 (AAESKMIDDG…FLGWDKTLWD (332 aa)) is actin-binding, Ca-sensitive. Residues Gly-421, Asp-422, Glu-449, Thr-499, Asn-539, Asp-540, Glu-562, Asp-642, and Glu-665 each contribute to the Ca(2+) site. 2 Gelsolin-like repeats span residues 524–564 (CRAV…SEIQ) and 625–667 (FIAE…EEKM).

Belongs to the villin/gelsolin family. As to expression, predominantly in the body wall muscle, but expression is not restricted to muscle cells.

The protein localises to the cytoplasm. Its subcellular location is the cytoskeleton. In terms of biological role, calcium-regulated, actin-modulating protein that binds to the plus (or barbed) ends of actin monomers or filaments, preventing monomer exchange (end-blocking or capping). It can promote the assembly of monomers into filaments (nucleation) as well as sever filaments already formed. In Halocynthia roretzi (Sea squirt), this protein is Gelsolin, cytoplasmic.